A 516-amino-acid chain; its full sequence is Maturase K (516 aa).

This sequence belongs to the intron maturase 2 family. MatK subfamily.

It is found in the plastid. The protein localises to the chloroplast. In terms of biological role, usually encoded in the trnK tRNA gene intron. Probably assists in splicing its own and other chloroplast group II introns. The polypeptide is Maturase K (Chara connivens (Convergent stonewort)).